An 87-amino-acid chain; its full sequence is Mitochondrial import inner membrane translocase subunit TIM9 (87 aa).

Methionine 1 carries the post-translational modification N-acetylmethionine. The Twin CX3C motif motif lies at 35-59; it reads CFTDCVNDFTTSKLTNKEQTCIMKC. Intrachain disulfides connect cysteine 35–cysteine 59 and cysteine 39–cysteine 55.

The protein belongs to the small Tim family. As to quaternary structure, heterohexamer; composed of 3 copies of TIM9 and 3 copies of TIM10, named soluble 70 kDa complex. Associates with the TIM12 component of the TIM22 complex, whose core is composed of TIM18, TIM22 and TIM54. Interacts with the transmembrane regions of multi-pass transmembrane proteins in transit.

Its subcellular location is the mitochondrion inner membrane. It localises to the mitochondrion intermembrane space. In terms of biological role, mitochondrial intermembrane chaperone that participates in the import and insertion of multi-pass transmembrane proteins into the mitochondrial inner membrane. Also required for the transfer of beta-barrel precursors from the TOM complex to the sorting and assembly machinery (SAM complex) of the outer membrane. Acts as a chaperone-like protein that protects the hydrophobic precursors from aggregation and guide them through the mitochondrial intermembrane space. Compared to TIM10, it may have a strong structural role. This Saccharomyces cerevisiae (strain ATCC 204508 / S288c) (Baker's yeast) protein is Mitochondrial import inner membrane translocase subunit TIM9 (TIM9).